The chain runs to 215 residues: L-fuculose phosphate aldolase (215 aa).

Residues 28 to 29, 43 to 44, and 71 to 72 each bind substrate; these read GN, TG, and SS. The Proton donor/acceptor role is filled by Glu-73. The Zn(2+) site is built by Glu-73, His-92, His-94, and His-155.

This sequence belongs to the aldolase class II family. AraD/FucA subfamily. Homotetramer. Zn(2+) is required as a cofactor.

The enzyme catalyses L-fuculose 1-phosphate = (S)-lactaldehyde + dihydroxyacetone phosphate. It functions in the pathway carbohydrate degradation; L-fucose degradation; L-lactaldehyde and glycerone phosphate from L-fucose: step 3/3. Involved in the degradation of L-fucose and D-arabinose. Catalyzes the reversible cleavage of L-fuculose 1-phosphate (Fuc1P) to yield dihydroxyacetone phosphate (DHAP) and L-lactaldehyde. In Escherichia coli O157:H7, this protein is L-fuculose phosphate aldolase.